A 242-amino-acid chain; its full sequence is Floral homeotic protein AGAMOUS (242 aa).

Positions Arg19–Tyr73 constitute an MADS-box domain. Residues Ala103 to Ala193 form the K-box domain.

As to expression, flower. Preferentially expressed in stamen and carpel and weakly in petal. Undetected in leaves and roots.

Its subcellular location is the nucleus. In terms of biological role, probable transcription factor involved in regulating genes that determines stamen and carpel development in wild-type flowers. The sequence is that of Floral homeotic protein AGAMOUS (AG2) from Panax ginseng (Korean ginseng).